A 280-amino-acid chain; its full sequence is Putative pyruvate, phosphate dikinase regulatory protein 1 (280 aa).

Residue 152–159 (GVSRTSKT) coordinates ADP.

Belongs to the pyruvate, phosphate/water dikinase regulatory protein family. PDRP subfamily.

It catalyses the reaction N(tele)-phospho-L-histidyl/L-threonyl-[pyruvate, phosphate dikinase] + ADP = N(tele)-phospho-L-histidyl/O-phospho-L-threonyl-[pyruvate, phosphate dikinase] + AMP + H(+). The catalysed reaction is N(tele)-phospho-L-histidyl/O-phospho-L-threonyl-[pyruvate, phosphate dikinase] + phosphate + H(+) = N(tele)-phospho-L-histidyl/L-threonyl-[pyruvate, phosphate dikinase] + diphosphate. Its function is as follows. Bifunctional serine/threonine kinase and phosphorylase involved in the regulation of the pyruvate, phosphate dikinase (PPDK) by catalyzing its phosphorylation/dephosphorylation. The protein is Putative pyruvate, phosphate dikinase regulatory protein 1 of Latilactobacillus sakei subsp. sakei (strain 23K) (Lactobacillus sakei subsp. sakei).